The sequence spans 342 residues: Glycerol-3-phosphate dehydrogenase [NAD(P)+] (342 aa).

NADPH contacts are provided by Ser-13, Trp-14, and Lys-108. Lys-108, Gly-139, and Ser-141 together coordinate sn-glycerol 3-phosphate. Ala-143 is a binding site for NADPH. Residues Lys-194, Asp-247, Ser-257, Arg-258, and Asn-259 each contribute to the sn-glycerol 3-phosphate site. Catalysis depends on Lys-194, which acts as the Proton acceptor. Arg-258 contributes to the NADPH binding site. Positions 282 and 284 each coordinate NADPH.

This sequence belongs to the NAD-dependent glycerol-3-phosphate dehydrogenase family.

The protein resides in the cytoplasm. It carries out the reaction sn-glycerol 3-phosphate + NAD(+) = dihydroxyacetone phosphate + NADH + H(+). It catalyses the reaction sn-glycerol 3-phosphate + NADP(+) = dihydroxyacetone phosphate + NADPH + H(+). It functions in the pathway membrane lipid metabolism; glycerophospholipid metabolism. Its function is as follows. Catalyzes the reduction of the glycolytic intermediate dihydroxyacetone phosphate (DHAP) to sn-glycerol 3-phosphate (G3P), the key precursor for phospholipid synthesis. The sequence is that of Glycerol-3-phosphate dehydrogenase [NAD(P)+] from Lactococcus lactis subsp. cremoris (strain MG1363).